We begin with the raw amino-acid sequence, 132 residues long: Small ribosomal subunit protein uS8 (132 aa).

It belongs to the universal ribosomal protein uS8 family. Part of the 30S ribosomal subunit. Contacts proteins S5 and S12.

Functionally, one of the primary rRNA binding proteins, it binds directly to 16S rRNA central domain where it helps coordinate assembly of the platform of the 30S subunit. The polypeptide is Small ribosomal subunit protein uS8 (Bacillus licheniformis (strain ATCC 14580 / DSM 13 / JCM 2505 / CCUG 7422 / NBRC 12200 / NCIMB 9375 / NCTC 10341 / NRRL NRS-1264 / Gibson 46)).